The chain runs to 245 residues: 1-(5-phosphoribosyl)-5-[(5-phosphoribosylamino)methylideneamino] imidazole-4-carboxamide isomerase (245 aa).

The active-site Proton acceptor is aspartate 7. Aspartate 129 acts as the Proton donor in catalysis.

Belongs to the HisA/HisF family.

The protein resides in the cytoplasm. The enzyme catalyses 1-(5-phospho-beta-D-ribosyl)-5-[(5-phospho-beta-D-ribosylamino)methylideneamino]imidazole-4-carboxamide = 5-[(5-phospho-1-deoxy-D-ribulos-1-ylimino)methylamino]-1-(5-phospho-beta-D-ribosyl)imidazole-4-carboxamide. Its pathway is amino-acid biosynthesis; L-histidine biosynthesis; L-histidine from 5-phospho-alpha-D-ribose 1-diphosphate: step 4/9. This chain is 1-(5-phosphoribosyl)-5-[(5-phosphoribosylamino)methylideneamino] imidazole-4-carboxamide isomerase, found in Shewanella halifaxensis (strain HAW-EB4).